The primary structure comprises 283 residues: MKVLNELRQFYPLDELLRAAEIPRSTFYYHLKALSKPDKYADVKKRISEIYHENRGRYGYRRVTLSLHREGKQINHKAVQRLMGTLSLKAAIKVKRYRSYRGEVGQTAPNVLQRDFKATRPNEKWVTDVTEFAVNGRKLYLSPVIDLFNNEVISYSLSERPVMNMVENMLDQAFKKLNPHEHPVLHSDQGWQYRMRRYQNILKEHGIKQSMSRKGNCLDNAVVECFFGTLKSECFYLDEFSNISELKDAVTEYIEYYNSRRISLKLKGLTPIEYRNQTYMPRV.

Residues 117 to 279 form the Integrase catalytic domain; that stretch reads KATRPNEKWV…TPIEYRNQTY (163 aa).

It belongs to the transposase IS3/IS150/IS904 family.

Involved in the transposition of the insertion sequence IS150. This is Putative transposase InsK for insertion sequence element IS150 (insK) from Escherichia coli (strain K12).